A 401-amino-acid polypeptide reads, in one-letter code: (1R,4R,5S)-(-)-guaia-6,10(14)-diene synthase (401 aa).

The tract at residues 1-21 (MVKFDSGSESEMTNGDDLHIN) is disordered. Positions 134 and 139 each coordinate Mg(2+). A DDXXD motif motif is present at residues 134-138 (DDQFD). Arg242 is a substrate binding site. The Mg(2+) site is built by Asn288 and Ser292. Lys295 contributes to the substrate binding site. Residue Asp296 participates in Mg(2+) binding. 375–376 (RY) serves as a coordination point for substrate.

This sequence belongs to the terpene synthase family. Mg(2+) serves as cofactor.

It carries out the reaction (2E,6E)-farnesyl diphosphate = (1R,4R,5S)-(-)-guaia-6,10(14)-diene + diphosphate. The protein operates within secondary metabolite biosynthesis; terpenoid biosynthesis. Functionally, catalyzes the conversion of (2E,6E)-farnesyl diphosphate (FPP) to yield the bicyclic sesquiterpene guaia-6,10(14)-diene via a 1,10-cyclization, which requires the abstraction of the pyrophosphate from FPP to yield the (E,E)-germacradienyl cation. The only accepted substrate is farnesyl diphosphate (FPP). This chain is (1R,4R,5S)-(-)-guaia-6,10(14)-diene synthase, found in Fusarium proliferatum (strain ET1) (Orchid endophyte fungus).